The sequence spans 160 residues: Deoxyuridine 5'-triphosphate nucleotidohydrolase (160 aa).

Serine 80, glycine 93, aspartate 96, tyrosine 99, lysine 104, arginine 149, phenylalanine 154, and glycine 155 together coordinate dUMP.

The protein belongs to the dUTPase family. In terms of assembly, homotrimer. Mg(2+) serves as cofactor.

It carries out the reaction dUTP + H2O = dUMP + diphosphate + H(+). The protein operates within pyrimidine metabolism; dUMP biosynthesis; dUMP from dCTP (dUTP route): step 2/2. Its function is as follows. Involved in nucleotide metabolism via production of dUMP, the immediate precursor of thymidine nucleotides, and decreases the intracellular concentration of dUTP so that uracil cannot be incorporated into DNA. The sequence is that of Deoxyuridine 5'-triphosphate nucleotidohydrolase (DUT1) from Debaryomyces hansenii (strain ATCC 36239 / CBS 767 / BCRC 21394 / JCM 1990 / NBRC 0083 / IGC 2968) (Yeast).